Reading from the N-terminus, the 359-residue chain is N-acetylneuraminate-9-phosphate synthase (359 aa).

N6-acetyllysine occurs at positions 61, 74, and 79. Residue Ser-275 is modified to Phosphoserine. Lys-290 is subject to N6-acetyllysine. The 60-residue stretch at 294 to 353 folds into the AFP-like domain; that stretch reads SVVAKVKIPEGTILTMDMLTVKVGEPKGYPPEDIFNLVGKKVLVTVEEDDTIMEELVDNH.

Ubiquitous.

It carries out the reaction aldehydo-N-acetyl-D-mannosamine 6-phosphate + phosphoenolpyruvate + H2O = N-acetylneuraminate 9-phosphate + phosphate. The enzyme catalyses aldehydo-D-mannose 6-phosphate + phosphoenolpyruvate + H2O = 3-deoxy-D-glycero-beta-D-galacto-non-2-ulopyranosonate 9-phosphate + phosphate. Functionally, catalyzes the condensation of phosphoenolpyruvate (PEP) and N-acetylmannosamine 6-phosphate (ManNAc-6-P) to synthesize N-acetylneuraminate-9-phosphate (Neu5Ac-9-P). Also catalyzes the condensation of PEP and D-mannose 6-phosphate (Man-6-P) to produce 3-deoxy-D-glycero-beta-D-galacto-non-2-ulopyranosonate 9-phosphate (KDN-9-P). Neu5Ac-9-P and KDN-9-P are the phosphorylated forms of sialic acids N-acetylneuraminic acid (Neu5Ac) and deaminoneuraminic acid (KDN), respectively. Required for brain and skeletal development. In Homo sapiens (Human), this protein is N-acetylneuraminate-9-phosphate synthase.